The following is a 574-amino-acid chain: Avenacosidase 1 (574 aa).

Residues 1–55 (MALLCSALSNSTHPSFRSHIGANSENLWHLSADPAQKSKRRCNLTLSSRAARISS) constitute a chloroplast transit peptide. A beta-D-glucoside is bound by residues glutamine 88, histidine 192, and 237–238 (NE). Glutamate 238 functions as the Proton donor in the catalytic mechanism. Cysteine 258 and cysteine 264 are oxidised to a cystine. A beta-D-glucoside is bound by residues tyrosine 381, glutamate 454, tryptophan 505, 512 to 513 (EW), and phenylalanine 521. The active-site Nucleophile is the glutamate 454.

This sequence belongs to the glycosyl hydrolase 1 family. In terms of assembly, homo- and heteromultimer with P60B in a 1:1 stoichiometry. Aggregates to form the fibrillar stromacentre. In terms of tissue distribution, expressed in caryopses, coleoptiles, primary leaves, and etiolated and green seedlings, but not in roots.

The protein localises to the plastid. Its subcellular location is the chloroplast stroma. It carries out the reaction avenacoside B + H2O = 26-desgluco-avenacoside B + D-glucose. With respect to regulation, inhibited by N-(3-Dimethylaminopropyl)-N'-ethylcarbodiimide hydrochloride (EDC). Functionally, beta-glucosidase acting as a preformed defense system. Hydrolyzes the bisdesmosides avenacosides A and B to 26-desgluco-avenacosides exhibiting fungicidal activity. Can use beta-fucoside &gt; beta-glucoside &gt; beta-galactoside &gt; beta-xyloside as substrates, but not alpha-glycosides, beta-thioglucosides and disaccharides. The sequence is that of Avenacosidase 1 (P60A) from Avena sativa (Oat).